A 228-amino-acid chain; its full sequence is Caspase recruitment domain-containing protein 19 (228 aa).

Cys7 and Cys77 form a disulfide bridge. The 92-residue stretch at Asp8 to His99 folds into the CARD domain. Val113 bears the Phosphoserine mark.

As to quaternary structure, associates with BCL10 by CARD-CARD interaction. Expressed in ovary, testis, placenta, skeletal muscle, kidney, lung, heart and liver (at protein level). Expressed in thymus and brain.

The protein resides in the nucleus. The protein localises to the endoplasmic reticulum membrane. It localises to the mitochondrion membrane. In terms of biological role, plays a role in inhibiting the effects of BCL10-induced activation of NF-kappa-B. May inhibit the phosphorylation of BCL10 in a CARD-dependent manner. In Homo sapiens (Human), this protein is Caspase recruitment domain-containing protein 19 (CARD19).